The chain runs to 197 residues: ATP-dependent Clp protease proteolytic subunit (197 aa).

The Nucleophile role is filled by serine 98. Histidine 123 is a catalytic residue.

This sequence belongs to the peptidase S14 family. In terms of assembly, fourteen ClpP subunits assemble into 2 heptameric rings which stack back to back to give a disk-like structure with a central cavity, resembling the structure of eukaryotic proteasomes.

The protein resides in the cytoplasm. The catalysed reaction is Hydrolysis of proteins to small peptides in the presence of ATP and magnesium. alpha-casein is the usual test substrate. In the absence of ATP, only oligopeptides shorter than five residues are hydrolyzed (such as succinyl-Leu-Tyr-|-NHMec, and Leu-Tyr-Leu-|-Tyr-Trp, in which cleavage of the -Tyr-|-Leu- and -Tyr-|-Trp bonds also occurs).. Cleaves peptides in various proteins in a process that requires ATP hydrolysis. Has a chymotrypsin-like activity. Plays a major role in the degradation of misfolded proteins. This Anaplasma phagocytophilum (strain HZ) protein is ATP-dependent Clp protease proteolytic subunit.